The following is a 72-amino-acid chain: Putative sodium channel toxin Ts18 (72 aa).

Residues Met1 to Thr21 form the signal peptide. Disulfide bonds link Cys38-Cys61, Cys47-Cys66, and Cys51-Cys68.

Belongs to the long (3 C-C) scorpion toxin superfamily. Expressed by the venom gland.

The protein localises to the secreted. Its function is as follows. Binds to sodium channels (Nav) and affects the channel activation process. The chain is Putative sodium channel toxin Ts18 from Tityus serrulatus (Brazilian scorpion).